A 534-amino-acid chain; its full sequence is Glycerophosphodiester transporter GIT2 (534 aa).

12 helical membrane-spanning segments follow: residues 63 to 83 (GAGLFADGYVNNSIGIVMACL), 96 to 116 (AISNIGSIGFVGTVVGQLSFG), 135 to 155 (LIAFTLLCAVGSWGTTIQGFF), 163 to 183 (FCLGVAIGAEYPTSSVIASEF), 202 to 222 (FMIDFGFVVSAFVPFVLLWIF), 230 to 250 (LWRVSIGLGAILPTALFFIRL), 289 to 309 (MIWFIYNFSVYSFGTFNAIIL), 322 to 342 (WGWSVVFNLFYIPGSFLGAFS), 350 to 370 (LTLAIGVGLQGIIGFIMSACL), 377 to 397 (VAAFTVVFGIFATLGEFGPGG), 417 to 437 (GIAAAMGKIGAFVGTWIFPAI), and 453 to 473 (VPFYLSSGLCIFSALLTFFLC).

This sequence belongs to the major facilitator superfamily. Sugar transporter (TC 2.A.1.1) family.

The protein resides in the cell membrane. Functionally, probable glycerophosphodiester transporter. Does not possess detectable glycerophosphoinositol (GroPIns) transport activity. Might be involved in the uptake of glycerophosphocholine (GroPCho). The expanded ability to utilize GroPIns and GroPCho results from the organism's pathogenic nature and its need to occupy a variety of environments within its host organism. This possibility is buttressed by the fact that GroPIns and GroPCho are present and abundant in human fluids. The sequence is that of Glycerophosphodiester transporter GIT2 from Candida albicans (strain SC5314 / ATCC MYA-2876) (Yeast).